A 100-amino-acid chain; its full sequence is NADH-quinone oxidoreductase subunit K (100 aa).

3 consecutive transmembrane segments (helical) span residues 4 to 24 (LQHG…GLLV), 28 to 48 (LLFM…AFIV), and 60 to 80 (VMYI…LALL).

It belongs to the complex I subunit 4L family. NDH-1 is composed of 13 different subunits. Subunits NuoA, H, J, K, L, M, N constitute the membrane sector of the complex.

The protein localises to the cell inner membrane. The catalysed reaction is a quinone + NADH + 5 H(+)(in) = a quinol + NAD(+) + 4 H(+)(out). NDH-1 shuttles electrons from NADH, via FMN and iron-sulfur (Fe-S) centers, to quinones in the respiratory chain. The immediate electron acceptor for the enzyme in this species is believed to be ubiquinone. Couples the redox reaction to proton translocation (for every two electrons transferred, four hydrogen ions are translocated across the cytoplasmic membrane), and thus conserves the redox energy in a proton gradient. This chain is NADH-quinone oxidoreductase subunit K, found in Serratia proteamaculans (strain 568).